A 376-amino-acid chain; its full sequence is Glutamate 5-kinase (376 aa).

K15 provides a ligand contact to ATP. Substrate contacts are provided by S56, D143, and N155. 175–176 (SD) is a binding site for ATP. The 78-residue stretch at 281 to 358 (KGTLTIDAGA…PDVMSILGVS (78 aa)) folds into the PUA domain.

It belongs to the glutamate 5-kinase family.

The protein resides in the cytoplasm. The enzyme catalyses L-glutamate + ATP = L-glutamyl 5-phosphate + ADP. It functions in the pathway amino-acid biosynthesis; L-proline biosynthesis; L-glutamate 5-semialdehyde from L-glutamate: step 1/2. Functionally, catalyzes the transfer of a phosphate group to glutamate to form L-glutamate 5-phosphate. The chain is Glutamate 5-kinase from Rhodopseudomonas palustris (strain HaA2).